The following is a 556-amino-acid chain: Urocanate hydratase (556 aa).

NAD(+) contacts are provided by residues 52 to 53, Gln130, 176 to 178, Glu196, Arg201, 242 to 243, 263 to 267, 273 to 274, and Tyr322; these read GG, GMG, NA, QTSAH, and YL. Residue Cys410 is part of the active site. Gly492 provides a ligand contact to NAD(+).

This sequence belongs to the urocanase family. Requires NAD(+) as cofactor.

It localises to the cytoplasm. The enzyme catalyses 4-imidazolone-5-propanoate = trans-urocanate + H2O. It functions in the pathway amino-acid degradation; L-histidine degradation into L-glutamate; N-formimidoyl-L-glutamate from L-histidine: step 2/3. Its function is as follows. Catalyzes the conversion of urocanate to 4-imidazolone-5-propionate. This is Urocanate hydratase from Shewanella woodyi (strain ATCC 51908 / MS32).